The following is a 29-amino-acid chain: Glucagon (29 aa).

It belongs to the glucagon family.

It is found in the secreted. Promotes hydrolysis of glycogen and lipids, and raises the blood sugar level. The protein is Glucagon (gcg) of Thunnus obesus (Bigeye tuna).